Reading from the N-terminus, the 410-residue chain is Cysteine desulfurase IscS (410 aa).

Residues 80–81, Asn-160, Gln-188, and 208–210 each bind pyridoxal 5'-phosphate; these read AT and SGH. Lys-211 is subject to N6-(pyridoxal phosphate)lysine. Residue Thr-248 participates in pyridoxal 5'-phosphate binding. The Cysteine persulfide intermediate role is filled by Cys-334. Cys-334 provides a ligand contact to [2Fe-2S] cluster.

This sequence belongs to the class-V pyridoxal-phosphate-dependent aminotransferase family. NifS/IscS subfamily. Homodimer. Forms a heterotetramer with IscU, interacts with other sulfur acceptors. It depends on pyridoxal 5'-phosphate as a cofactor.

It localises to the cytoplasm. It carries out the reaction (sulfur carrier)-H + L-cysteine = (sulfur carrier)-SH + L-alanine. It functions in the pathway cofactor biosynthesis; iron-sulfur cluster biosynthesis. Master enzyme that delivers sulfur to a number of partners involved in Fe-S cluster assembly, tRNA modification or cofactor biosynthesis. Catalyzes the removal of elemental sulfur atoms from cysteine to produce alanine. Functions as a sulfur delivery protein for Fe-S cluster synthesis onto IscU, an Fe-S scaffold assembly protein, as well as other S acceptor proteins. This Rickettsia rickettsii (strain Iowa) protein is Cysteine desulfurase IscS.